Here is a 200-residue protein sequence, read N- to C-terminus: dITP/XTP pyrophosphatase (200 aa).

19–24 (TSNAGK) is a binding site for substrate. Mg(2+) is bound by residues Glu-49 and Asp-78. Asp-78 functions as the Proton acceptor in the catalytic mechanism. Substrate-binding positions include Ser-79, 158 to 161 (FGYD), Lys-181, and 186 to 187 (HR).

This sequence belongs to the HAM1 NTPase family. As to quaternary structure, homodimer. The cofactor is Mg(2+).

It carries out the reaction XTP + H2O = XMP + diphosphate + H(+). The enzyme catalyses dITP + H2O = dIMP + diphosphate + H(+). It catalyses the reaction ITP + H2O = IMP + diphosphate + H(+). In terms of biological role, pyrophosphatase that catalyzes the hydrolysis of nucleoside triphosphates to their monophosphate derivatives, with a high preference for the non-canonical purine nucleotides XTP (xanthosine triphosphate), dITP (deoxyinosine triphosphate) and ITP. Seems to function as a house-cleaning enzyme that removes non-canonical purine nucleotides from the nucleotide pool, thus preventing their incorporation into DNA/RNA and avoiding chromosomal lesions. The chain is dITP/XTP pyrophosphatase from Deinococcus radiodurans (strain ATCC 13939 / DSM 20539 / JCM 16871 / CCUG 27074 / LMG 4051 / NBRC 15346 / NCIMB 9279 / VKM B-1422 / R1).